Consider the following 99-residue polypeptide: NADH-quinone oxidoreductase subunit K (99 aa).

3 helical membrane passes run 3–23 (VTAYVVLSGILFTIGCVGVLI), 28–48 (IVVFMCVELMLNASNLALVAF), and 59–79 (IAAFFVMVVAAAEVVVGLAII).

Belongs to the complex I subunit 4L family. As to quaternary structure, NDH-1 is composed of 14 different subunits. Subunits NuoA, H, J, K, L, M, N constitute the membrane sector of the complex.

Its subcellular location is the cell membrane. The enzyme catalyses a quinone + NADH + 5 H(+)(in) = a quinol + NAD(+) + 4 H(+)(out). Functionally, NDH-1 shuttles electrons from NADH, via FMN and iron-sulfur (Fe-S) centers, to quinones in the respiratory chain. The immediate electron acceptor for the enzyme in this species is believed to be a menaquinone. Couples the redox reaction to proton translocation (for every two electrons transferred, four hydrogen ions are translocated across the cytoplasmic membrane), and thus conserves the redox energy in a proton gradient. The chain is NADH-quinone oxidoreductase subunit K from Nocardioides sp. (strain ATCC BAA-499 / JS614).